The chain runs to 448 residues: ATP-dependent protease ATPase subunit HslU (448 aa).

Residues isoleucine 18, glycine 60–glutamate 65, aspartate 261, glutamate 326, and arginine 398 contribute to the ATP site.

The protein belongs to the ClpX chaperone family. HslU subfamily. In terms of assembly, a double ring-shaped homohexamer of HslV is capped on each side by a ring-shaped HslU homohexamer. The assembly of the HslU/HslV complex is dependent on binding of ATP.

It localises to the cytoplasm. Its function is as follows. ATPase subunit of a proteasome-like degradation complex; this subunit has chaperone activity. The binding of ATP and its subsequent hydrolysis by HslU are essential for unfolding of protein substrates subsequently hydrolyzed by HslV. HslU recognizes the N-terminal part of its protein substrates and unfolds these before they are guided to HslV for hydrolysis. This Paraburkholderia xenovorans (strain LB400) protein is ATP-dependent protease ATPase subunit HslU.